The chain runs to 419 residues: Gamma-glutamyl phosphate reductase (419 aa).

Belongs to the gamma-glutamyl phosphate reductase family.

It localises to the cytoplasm. The enzyme catalyses L-glutamate 5-semialdehyde + phosphate + NADP(+) = L-glutamyl 5-phosphate + NADPH + H(+). It participates in amino-acid biosynthesis; L-proline biosynthesis; L-glutamate 5-semialdehyde from L-glutamate: step 2/2. In terms of biological role, catalyzes the NADPH-dependent reduction of L-glutamate 5-phosphate into L-glutamate 5-semialdehyde and phosphate. The product spontaneously undergoes cyclization to form 1-pyrroline-5-carboxylate. In Caldicellulosiruptor saccharolyticus (strain ATCC 43494 / DSM 8903 / Tp8T 6331), this protein is Gamma-glutamyl phosphate reductase.